Consider the following 234-residue polypeptide: Small ribosomal subunit protein uS3 (234 aa).

Positions 39–107 (IRKFLKKELY…EVSINIKEVK (69 aa)) constitute a KH type-2 domain.

The protein belongs to the universal ribosomal protein uS3 family. In terms of assembly, part of the 30S ribosomal subunit. Forms a tight complex with proteins S10 and S14.

Functionally, binds the lower part of the 30S subunit head. Binds mRNA in the 70S ribosome, positioning it for translation. This chain is Small ribosomal subunit protein uS3, found in Helicobacter pylori (strain J99 / ATCC 700824) (Campylobacter pylori J99).